Consider the following 91-residue polypeptide: Cytochrome b-c1 complex subunit 10, mitochondrial (91 aa).

Topologically, residues 1–34 (MFATSILRSAYPAYKSPYGPKYQYQPHIDGITPK) are mitochondrial matrix. Residues 35-58 (QLVRILPTAAAWTGVALFAVVYYA) form a helical membrane-spanning segment. Topologically, residues 59 to 91 (SGIPRLRRDVLQRIPYLGERYFVNEIPASDNPF) are mitochondrial intermembrane.

Belongs to the UQCR11/QCR10 family. Component of the ubiquinol-cytochrome c oxidoreductase (cytochrome b-c1 complex, complex III, CIII), a multisubunit enzyme composed of 10 subunits. The complex is composed of 3 respiratory subunits cytochrome b (cob), cytochrome c1 (cyt-1) and Rieske protein (fes-1), 2 core protein subunits pep and ucr-1, and 5 low-molecular weight protein subunits qcr6, qcr7, qcr8, qcr9 and probably NCU16844/qcr10. The complex exists as an obligatory dimer and forms supercomplexes (SCs) in the inner mitochondrial membrane with NADH-ubiquinone oxidoreductase (complex I, CI) and cytochrome c oxidase (complex IV, CIV), resulting in different assemblies (supercomplexes SCI(1)III(2), SCIII(2)IV(1) and SCIII(2)IV(2) as well as higher order I(x)III(y)IV(z) megacomplexes).

It localises to the mitochondrion inner membrane. Its function is as follows. Component of the ubiquinol-cytochrome c oxidoreductase, a multisubunit transmembrane complex that is part of the mitochondrial electron transport chain which drives oxidative phosphorylation. The respiratory chain contains 3 multisubunit complexes succinate dehydrogenase (complex II, CII), ubiquinol-cytochrome c oxidoreductase (cytochrome b-c1 complex, complex III, CIII) and cytochrome c oxidase (complex IV, CIV), that cooperate to transfer electrons derived from NADH and succinate to molecular oxygen, creating an electrochemical gradient over the inner membrane that drives transmembrane transport and the ATP synthase. The cytochrome b-c1 complex catalyzes electron transfer from ubiquinol to cytochrome c, linking this redox reaction to translocation of protons across the mitochondrial inner membrane, with protons being carried across the membrane as hydrogens on the quinol. In the process called Q cycle, 2 protons are consumed from the matrix, 4 protons are released into the intermembrane space and 2 electrons are passed to cytochrome c. The protein is Cytochrome b-c1 complex subunit 10, mitochondrial of Neurospora crassa (strain ATCC 24698 / 74-OR23-1A / CBS 708.71 / DSM 1257 / FGSC 987).